Here is a 495-residue protein sequence, read N- to C-terminus: Cytochrome P450 monooxygenase 88 (495 aa).

A helical membrane pass occupies residues 2-22; the sequence is FLQIVTSVLATGLLYALISVL. 2 N-linked (GlcNAc...) asparagine glycosylation sites follow: Asn-25 and Asn-198. Cys-428 is a binding site for heme.

The protein belongs to the cytochrome P450 family. It depends on heme as a cofactor.

Its subcellular location is the membrane. Its pathway is secondary metabolite biosynthesis. Cytochrome P450 monooxygenase that is able to use 4-ethoxybenzoic acid as a substrate for oxidation. This chain is Cytochrome P450 monooxygenase 88, found in Postia placenta (strain ATCC 44394 / Madison 698-R) (Brown rot fungus).